An 88-amino-acid chain; its full sequence is UPF0297 protein SAK_2030 (88 aa).

Belongs to the UPF0297 family.

This chain is UPF0297 protein SAK_2030, found in Streptococcus agalactiae serotype Ia (strain ATCC 27591 / A909 / CDC SS700).